A 346-amino-acid chain; its full sequence is Elongation factor Ts (346 aa).

The interval 80–83 is involved in Mg(2+) ion dislocation from EF-Tu; that stretch reads TDFV.

This sequence belongs to the EF-Ts family.

It is found in the cytoplasm. Its function is as follows. Associates with the EF-Tu.GDP complex and induces the exchange of GDP to GTP. It remains bound to the aminoacyl-tRNA.EF-Tu.GTP complex up to the GTP hydrolysis stage on the ribosome. This chain is Elongation factor Ts, found in Streptococcus pyogenes serotype M18 (strain MGAS8232).